Consider the following 321-residue polypeptide: MNTEATHDQNEAQTTGVRLRNAREQLGLSQQAVAERLCLKVSTVRDIEEDKAPSDLASTFLRGYIRSYARLVHVPEEELLPGLEKQAPLRAAKVAPMQNFSLGKRRKKRDGWLMSFTWLVLFVVVGLTGAWWWQNHKAQQEEITTMADQSTAELNADKDSGQGVQLDTRAAASQDTTPAETAPAAPVDSTAAATQNTVVAPSQANVDTAATSATATETSSALPTDQAGVAAPAADSNALVMNFTADCWLEVTDATGKKLFSGMQRKDGNLNLTGQAPYKLKIGAPAAVQIQYQGKPVDLSRFIRTNQVARLTINAEPTSAQ.

The Cytoplasmic portion of the chain corresponds to 1-111 (MNTEATHDQN…LGKRRKKRDG (111 aa)). In terms of domain architecture, HTH cro/C1-type spans 19–71 (LRNAREQLGLSQQAVAERLCLKVSTVRDIEEDKAPSDLASTFLRGYIRSYARL). Positions 30–49 (QQAVAERLCLKVSTVRDIEE) form a DNA-binding region, H-T-H motif. A helical; Signal-anchor for type II membrane protein membrane pass occupies residues 112–132 (WLMSFTWLVLFVVVGLTGAWW). Over 133–321 (WQNHKAQQEE…TINAEPTSAQ (189 aa)) the chain is Periplasmic. The segment at 167–190 (DTRAAASQDTTPAETAPAAPVDST) is disordered. A compositionally biased stretch (low complexity) spans 176-190 (TTPAETAPAAPVDST).

The protein belongs to the RodZ family.

It localises to the cell inner membrane. Cytoskeletal protein that is involved in cell-shape control through regulation of the length of the long axis. This Salmonella arizonae (strain ATCC BAA-731 / CDC346-86 / RSK2980) protein is Cytoskeleton protein RodZ.